The following is a 159-amino-acid chain: Cyclin-dependent kinase inhibitor 1 (159 aa).

Ser-2 carries the post-translational modification N-acetylserine. Ser-2 participates in a covalent cross-link: Glycyl serine ester (Ser-Gly) (interchain with G-Cter in ubiquitin). The C4-type zinc-finger motif lies at 12–40; it reads HRSKVCRCLFGPVDSEQLRRDCDALMAGC. The segment at 17 to 24 is required for binding cyclins; it reads CRCLFGPV. The segment at 53–58 is required for binding CDKs; that stretch reads VTETPL. Ser-78 carries the phosphoserine; by NUAK1 modification. Residues 78–106 form a disordered region; it reads SPGSRSRDDLGGDKRPSTSSALLQGPAPE. Basic and acidic residues predominate over residues 82–93; that stretch reads RSRDDLGGDKRP. Ser-112 is subject to Phosphoserine; by GSK3-beta. Residues 118-142 form a disordered region; sequence VSERPEDSPGGPGTSQGRKRRQTSL. Ser-125 carries the phosphoserine modification. The short motif at 135-159 is the PIP-box K+4 motif element; the sequence is RKRRQTSLTDFYHSKRRLVFCKRKP. Thr-140 carries the post-translational modification Phosphothreonine; by PKA, PKB/AKT1, PIM1 and PIM2. A Phosphoserine; by NUAK1 modification is found at Ser-141. The interaction with TRIM39 stretch occupies residues 147 to 159; the sequence is HSKRRLVFCKRKP.

This sequence belongs to the CDI family. In terms of assembly, interacts with HDAC1; the interaction is prevented by competitive binding of C10orf90/FATS to HDAC1 facilitating acetylation and protein stabilization of CDKN1A/p21. Interacts with MKRN1. Interacts with PSMA3. Interacts with PCNA. Component of the ternary complex, cyclin D-CDK4-CDKN1A. Interacts (via its N-terminal domain) with CDK4; the interaction promotes the assembly of the cyclin D-CDK4 complex, its nuclear translocation and promotes the cyclin D-dependent enzyme activity of CDK4. Binding to CDK2 leads to CDK2/cyclin E inactivation at the G1-S phase DNA damage checkpoint, thereby arresting cells at the G1-S transition during DNA repair. Interacts with PIM1. Interacts with STK11. Interacts with NUAK1. Interacts with DTL and TRIM39. Interacts with PKP3; the interaction sequesters CDKN1A to the cytoplasm thereby repressing its role as an inhibitor of CDK4- and CDK6-driven RB1 phosphorylation. Post-translationally, phosphorylation of Thr-140 or Ser-141 impairs binding to PCNA. Phosphorylation at Ser-112 by GSK3-beta enhances ubiquitination by the DCX(DTL) complex. Phosphorylation of Thr-140 by PIM2 enhances its stability and inhibits cell proliferation. Phosphorylation of Thr-140 by PIM1 results in the relocation of CDKN1A to the cytoplasm and enhanced CDKN1A protein stability. UV radiation-induced phosphorylation at Ser-78 and Ser-141 by NUAK1 leads to its degradation. Ubiquitinated by MKRN1; leading to polyubiquitination and 26S proteasome-dependent degradation. Ubiquitinated by the DCX(DTL) complex, also named CRL4(CDT2) complex, leading to its degradation during S phase or following UV irradiation. Ubiquitination by the DCX(DTL) complex is essential to control replication licensing and is PCNA-dependent: interacts with PCNA via its PIP-box, while the presence of the containing the 'K+4' motif in the PIP box, recruit the DCX(DTL) complex, leading to its degradation. Ubiquitination at Ser-2 leads to degradation by the proteasome pathway. Ubiquitinated by RNF114; leading to proteasomal degradation. In terms of processing, acetylation leads to protein stability. Acetylated in vitro on Lys-136, Lys-149, Lys-156 and Lys-158. Deacetylation by HDAC1 is prevented by competitive binding of C10orf90/FATS to HDAC1. In terms of tissue distribution, expressed in keratinocytes (at protein level).

Its subcellular location is the cytoplasm. It localises to the nucleus. In terms of biological role, may be involved in p53/TP53 mediated inhibition of cellular proliferation in response to DNA damage. Binds to and inhibits cyclin-dependent kinase activity, preventing phosphorylation of critical cyclin-dependent kinase substrates and blocking cell cycle progression. Functions in the nuclear localization and assembly of cyclin D-CDK4 complex and promotes its kinase activity towards RB1. At higher stoichiometric ratios, inhibits the kinase activity of the cyclin D-CDK4 complex. Inhibits DNA synthesis by DNA polymerase delta by competing with POLD3 for PCNA binding. Plays an important role in controlling cell cycle progression and DNA damage-induced G2 arrest. Plays an important role in controlling cell cycle progression and DNA damage-induced G2 arrest. Involved in p53/TP53 mediated inhibition of cellular proliferation in response to DNA damage. Also involved in p53-independent DNA damage-induced G2 arrest mediated by CREB3L1 in astrocytes and osteoblasts. Binds to and inhibits cyclin-dependent kinase activity, preventing phosphorylation of critical cyclin-dependent kinase substrates and blocking cell cycle progression. Functions in the nuclear localization and assembly of cyclin D-CDK4 complex and promotes its kinase activity towards RB1. At higher stoichiometric ratios, inhibits the kinase activity of the cyclin D-CDK4 complex. Inhibits DNA synthesis by DNA polymerase delta by competing with POLD3 for PCNA binding. Negatively regulates the CDK4- and CDK6-driven phosphorylation of RB1 in keratinocytes, thereby resulting in the release of E2F1 and subsequent transcription of E2F1-driven G1/S phase promoting genes. The polypeptide is Cyclin-dependent kinase inhibitor 1 (Cdkn1a) (Mus musculus (Mouse)).